The sequence spans 344 residues: Glycerol-3-phosphate dehydrogenase [NAD(P)+] (344 aa).

The NADPH site is built by tryptophan 18, histidine 38, and lysine 115. Residues lysine 115, glycine 144, and threonine 146 each contribute to the sn-glycerol 3-phosphate site. Alanine 148 contacts NADPH. Sn-glycerol 3-phosphate-binding residues include lysine 199, aspartate 252, serine 262, arginine 263, and asparagine 264. Lysine 199 acts as the Proton acceptor in catalysis. NADPH is bound at residue arginine 263. NADPH contacts are provided by valine 288 and glutamate 290.

It belongs to the NAD-dependent glycerol-3-phosphate dehydrogenase family.

It localises to the cytoplasm. The enzyme catalyses sn-glycerol 3-phosphate + NAD(+) = dihydroxyacetone phosphate + NADH + H(+). It carries out the reaction sn-glycerol 3-phosphate + NADP(+) = dihydroxyacetone phosphate + NADPH + H(+). It functions in the pathway membrane lipid metabolism; glycerophospholipid metabolism. Functionally, catalyzes the reduction of the glycolytic intermediate dihydroxyacetone phosphate (DHAP) to sn-glycerol 3-phosphate (G3P), the key precursor for phospholipid synthesis. This chain is Glycerol-3-phosphate dehydrogenase [NAD(P)+], found in Hydrogenovibrio crunogenus (strain DSM 25203 / XCL-2) (Thiomicrospira crunogena).